Reading from the N-terminus, the 97-residue chain is Protein MxiI (97 aa).

To S.typhimurium PrgJ.

Its function is as follows. Necessary for the secretion of IPA invasins. The polypeptide is Protein MxiI (mxiI) (Shigella flexneri).